The primary structure comprises 446 residues: WD repeat domain phosphoinositide-interacting protein 1 (446 aa).

7 WD repeats span residues 3-42 (AEAA…LFSL), 47-88 (QLDQ…VYHF), 92-126 (TEIC…IHNI), 131-173 (LLKT…LYDG), 177-216 (KTVC…VFSV), 222-261 (LYEF…IFKL), and 304-343 (FATA…MYNL). The Nuclear receptor interaction motif lies at 131 to 136 (LLKTLL). Positions 225 to 228 (FRRG) match the L/FRRG motif motif. The interval 386 to 406 (ARPSASSASTVPGYSEDGGAL) is disordered.

It belongs to the WD repeat PROPPIN family. In terms of assembly, interacts with androgen receptor (AR) and the estrogen receptors ESR1 and ESR2. Interacts with WIPI2. Interacts with WDR45. Interacts with ATG16L1. May interact with NUDC. As to expression, ubiquitously expressed. Highly expressed in skeletal muscle, heart, testis, pancreas and placenta. Highly expressed in G361, Sk-mel-28, Sk-mel-13, WM852 and WM451 cells. Up-regulated in a variety of tumor tissues.

It localises to the golgi apparatus. Its subcellular location is the trans-Golgi network. The protein localises to the endosome. The protein resides in the cytoplasmic vesicle. It is found in the clathrin-coated vesicle. It localises to the preautophagosomal structure membrane. Its subcellular location is the cytoplasm. The protein localises to the cytoskeleton. In terms of biological role, component of the autophagy machinery that controls the major intracellular degradation process by which cytoplasmic materials are packaged into autophagosomes and delivered to lysosomes for degradation. Plays an important role in starvation- and calcium-mediated autophagy, as well as in mitophagy. Functions downstream of the ULK1 and PI3-kinases that produce phosphatidylinositol 3-phosphate (PtdIns3P) on membranes of the endoplasmic reticulum once activated. Binds phosphatidylinositol 3-phosphate (PtdIns3P), and maybe other phosphoinositides including PtdIns3,5P2 and PtdIns5P, and is recruited to phagophore assembly sites at the endoplasmic reticulum membranes. There, it assists WIPI2 in the recruitment of ATG12-ATG5-ATG16L1, a complex that directly controls the elongation of the nascent autophagosomal membrane. Together with WDR45/WIPI4, promotes ATG2 (ATG2A or ATG2B)-mediated lipid transfer by enhancing ATG2-association with phosphatidylinositol 3-monophosphate (PI3P)-containing membranes. Involved in xenophagy of Staphylococcus aureus. Invading S.aureus cells become entrapped in autophagosome-like WIPI1 positive vesicles targeted for lysosomal degradation. Also plays a distinct role in controlling the transcription of melanogenic enzymes and melanosome maturation, a process that is distinct from starvation-induced autophagy. May also regulate the trafficking of proteins involved in the mannose-6-phosphate receptor (MPR) recycling pathway. The polypeptide is WD repeat domain phosphoinositide-interacting protein 1 (WIPI1) (Homo sapiens (Human)).